Consider the following 701-residue polypeptide: Ribosomal RNA large subunit methyltransferase K/L (701 aa).

Residues 43–155 form the THUMP domain; sequence LLYKSLMWSR…NNILHIMLDL (113 aa).

Belongs to the methyltransferase superfamily. RlmKL family.

It is found in the cytoplasm. It carries out the reaction guanosine(2445) in 23S rRNA + S-adenosyl-L-methionine = N(2)-methylguanosine(2445) in 23S rRNA + S-adenosyl-L-homocysteine + H(+). The catalysed reaction is guanosine(2069) in 23S rRNA + S-adenosyl-L-methionine = N(2)-methylguanosine(2069) in 23S rRNA + S-adenosyl-L-homocysteine + H(+). In terms of biological role, specifically methylates the guanine in position 2445 (m2G2445) and the guanine in position 2069 (m7G2069) of 23S rRNA. The polypeptide is Ribosomal RNA large subunit methyltransferase K/L (Buchnera aphidicola subsp. Acyrthosiphon pisum (strain APS) (Acyrthosiphon pisum symbiotic bacterium)).